Consider the following 210-residue polypeptide: Glutathione S-transferase mdpJ (210 aa).

Positions 2-83 (SFGTLYTHNP…YCNDERSSLR (82 aa)) constitute a GST N-terminal domain. Residues 77–200 (DERSSLRILQ…VAGGVPDLGL (124 aa)) enclose the GST C-terminal domain.

This sequence belongs to the GST superfamily.

The protein operates within secondary metabolite biosynthesis. Its function is as follows. Glutathione S-transferase; part of the gene cluster that mediates the biosynthesis of monodictyphenone, a prenyl xanthone derivative. The pathway begins with the synthesis of atrochrysone thioester by the polyketide synthase (PKS) mdpG. The atrochrysone carboxyl ACP thioesterase mdpF then breaks the thioester bond and releases the atrochrysone carboxylic acid from mdpG. The atrochrysone carboxylic acid is then converted to atrochrysone which is further transformed into emodin anthrone. The next step is performed by the anthrone oxygenase mdpH that catalyzes the oxidation of emodinanthrone to emodin. Emodin is further modified to yield monodictyphenone via several steps involving mdpB, mdpC mdpJ, mdpK and mdpL. These enzymes with xptA, xptB and xptC are also proposed to be involved in the synthesis of shamixanthone from emodin. Especially, direct reduction of emodin by the short chain dehydrogenase mdpC followed by dehydration catalyzed by the scytalone dehydratase-like protein mdpB gives loss of oxygen and formation of chrysophanol intermediate in two simple steps. This is Glutathione S-transferase mdpJ from Emericella nidulans (strain FGSC A4 / ATCC 38163 / CBS 112.46 / NRRL 194 / M139) (Aspergillus nidulans).